We begin with the raw amino-acid sequence, 97 residues long: Protein SENESCENCE-ASSOCIATED GENE 21, mitochondrial (97 aa).

A mitochondrion-targeting transit peptide spans 1–46 (MARSISNVKIVSAFVSRELSNAIFRRGYAATAAQGSVSSGGRSGAV).

This sequence belongs to the LEA type 3 family. In terms of tissue distribution, expressed in roots, stems leaves and flowers, but not in seeds. In short days, observed in cotyledons and roots but absent from rosette leaves.

It is found in the mitochondrion. Functionally, mediates tolerance to oxidative stresses (e.g. hydrogen peroxide H(2)O(2), diamide, menadione and tert-butyl hydroperoxide) by minimizing the negative effects of oxidation and monitoring photosynthesis during stress. Promotes root development. Prevents premature aging (e.g. senescence and flowering). Involved in resistance against compatible pathogens such as Botrytis cinerea and Pseudomonas syringae pv. tomato. The polypeptide is Protein SENESCENCE-ASSOCIATED GENE 21, mitochondrial (Arabidopsis thaliana (Mouse-ear cress)).